Consider the following 64-residue polypeptide: UPF0434 protein Bcen_1934 (64 aa).

Belongs to the UPF0434 family.

The chain is UPF0434 protein Bcen_1934 from Burkholderia orbicola (strain AU 1054).